The chain runs to 466 residues: Asparagine--tRNA ligase (466 aa).

Belongs to the class-II aminoacyl-tRNA synthetase family. In terms of assembly, homodimer.

It is found in the cytoplasm. It catalyses the reaction tRNA(Asn) + L-asparagine + ATP = L-asparaginyl-tRNA(Asn) + AMP + diphosphate + H(+). The chain is Asparagine--tRNA ligase from Escherichia coli O139:H28 (strain E24377A / ETEC).